The primary structure comprises 317 residues: MESGNSTRRFSSFFLLGFTENPQLHFLIFALFLSMYLVTVLGNLLIIMAIITQSHLHTPMYFFLANLSFVDICFTSTTIPKMLVNIYTQSKSITYEDCISQMCVFLVFAELGNFLLAVMAYDRYVAXCHPLCYTVIVNHRLCILLLLLSWVISIFHAFIQSLIVLQLTFCGDVKIPHFFCELNQLSQLTCSDNFPSHLIMNLVPVMLAAISFSGILYSYFKIVSSIHSISTVQGKYKAFSTCASHLSIVSLFYSTGLGVYVSSAVVQSSHSAASASVMYTVVTPMLNPFIYSLRNKDVKRALERLLEGNCKVHHWTG.

Over 1 to 26 (MESGNSTRRFSSFFLLGFTENPQLHF) the chain is Extracellular. N5 is a glycosylation site (N-linked (GlcNAc...) asparagine). The chain crosses the membrane as a helical span at residues 27–51 (LIFALFLSMYLVTVLGNLLIIMAII). Residues 52-58 (TQSHLHT) are Cytoplasmic-facing. Residues 59 to 80 (PMYFFLANLSFVDICFTSTTIP) form a helical membrane-spanning segment. Over 81–101 (KMLVNIYTQSKSITYEDCISQ) the chain is Extracellular. C98 and C190 are disulfide-bonded. The chain crosses the membrane as a helical span at residues 102–121 (MCVFLVFAELGNFLLAVMAY). Topologically, residues 122 to 140 (DRYVAXCHPLCYTVIVNHR) are cytoplasmic. Residues 141-159 (LCILLLLLSWVISIFHAFI) form a helical membrane-spanning segment. At 160-197 (QSLIVLQLTFCGDVKIPHFFCELNQLSQLTCSDNFPSH) the chain is on the extracellular side. A helical membrane pass occupies residues 198–220 (LIMNLVPVMLAAISFSGILYSYF). The Cytoplasmic portion of the chain corresponds to 221–237 (KIVSSIHSISTVQGKYK). The chain crosses the membrane as a helical span at residues 238–261 (AFSTCASHLSIVSLFYSTGLGVYV). The Extracellular segment spans residues 262–273 (SSAVVQSSHSAA). A helical transmembrane segment spans residues 274 to 293 (SASVMYTVVTPMLNPFIYSL). Topologically, residues 294 to 317 (RNKDVKRALERLLEGNCKVHHWTG) are cytoplasmic.

This sequence belongs to the G-protein coupled receptor 1 family. In terms of tissue distribution, olfactory epithelium.

Its subcellular location is the cell membrane. Odorant receptor. The chain is Olfactory receptor 1082 (Olr1082) from Rattus norvegicus (Rat).